A 276-amino-acid polypeptide reads, in one-letter code: 4-chlorobenzoyl coenzyme A dehalogenase-2 (276 aa).

66-71 (AGFDLE) lines the substrate pocket. His-93 acts as the Proton acceptor in catalysis. Gly-117 contributes to the substrate binding site. Asp-148 serves as the catalytic Nucleophile. Position 261 (Arg-261) interacts with substrate.

The protein belongs to the enoyl-CoA hydratase/isomerase family. In terms of assembly, homotetramer.

The catalysed reaction is 4-chlorobenzoyl-CoA + H2O = 4-hydroxybenzoyl-CoA + chloride + H(+). It functions in the pathway xenobiotic degradation; 4-chlorobenzoate degradation; 4-hydroxybenzoate from 4-chlorobenzoate: step 2/3. Dehalogenates 4-chlorobenzoyl-CoA, 4-iodobenzoyl-CoA, 4-bromobenzoyl-CoA and, at a slower rate, 4-fluorobenzoyl-CoA. Does not dehalogenate 2-chlorobenzoyl-CoA or 3-chlorobenzoyl-CoA. The polypeptide is 4-chlorobenzoyl coenzyme A dehalogenase-2 (Arthrobacter sp).